Reading from the N-terminus, the 176-residue chain is Xanthine-guanine phosphoribosyltransferase (176 aa).

Residues 51 to 52 (RG) and 110 to 118 (DDLVDTGKT) contribute to the 5-phospho-alpha-D-ribose 1-diphosphate site. Position 111 (Asp111) interacts with Mg(2+). Positions 114 and 157 each coordinate guanine. 2 residues coordinate xanthine: Asp114 and Ile157. GMP-binding positions include 114–118 (DTGKT) and 156–157 (WI).

This sequence belongs to the purine/pyrimidine phosphoribosyltransferase family. XGPT subfamily. As to quaternary structure, homotetramer. The cofactor is Mg(2+).

The protein localises to the cell inner membrane. It carries out the reaction GMP + diphosphate = guanine + 5-phospho-alpha-D-ribose 1-diphosphate. It catalyses the reaction XMP + diphosphate = xanthine + 5-phospho-alpha-D-ribose 1-diphosphate. The enzyme catalyses IMP + diphosphate = hypoxanthine + 5-phospho-alpha-D-ribose 1-diphosphate. It functions in the pathway purine metabolism; GMP biosynthesis via salvage pathway; GMP from guanine: step 1/1. The protein operates within purine metabolism; XMP biosynthesis via salvage pathway; XMP from xanthine: step 1/1. In terms of biological role, purine salvage pathway enzyme that catalyzes the transfer of the ribosyl-5-phosphate group from 5-phospho-alpha-D-ribose 1-diphosphate (PRPP) to the N9 position of the 6-oxopurines guanine and xanthine to form the corresponding ribonucleotides GMP (guanosine 5'-monophosphate) and XMP (xanthosine 5'-monophosphate), with the release of PPi. To a lesser extent, also acts on hypoxanthine. This is Xanthine-guanine phosphoribosyltransferase from Bradyrhizobium diazoefficiens (strain JCM 10833 / BCRC 13528 / IAM 13628 / NBRC 14792 / USDA 110).